The primary structure comprises 177 residues: Cytochrome c-type biogenesis protein CcmE (177 aa).

Residues 1–8 (MNPRRKSR) lie on the Cytoplasmic side of the membrane. Residues 9–29 (LKVVMAVLSGLAVAVGLTLYA) traverse the membrane as a helical; Signal-anchor for type II membrane protein segment. At 30-177 (LSQNIDLFYT…QISQPFGENK (148 aa)) the chain is on the periplasmic side. Positions 131 and 135 each coordinate heme. The interval 134–177 (NYMPPELGDQMKKQHQPMGISEADLKGKSERDATQISQPFGENK) is disordered. Basic and acidic residues predominate over residues 156-166 (ADLKGKSERDA). The segment covering 167–177 (TQISQPFGENK) has biased composition (polar residues).

This sequence belongs to the CcmE/CycJ family.

The protein localises to the cell inner membrane. Functionally, heme chaperone required for the biogenesis of c-type cytochromes. Transiently binds heme delivered by CcmC and transfers the heme to apo-cytochromes in a process facilitated by CcmF and CcmH. This chain is Cytochrome c-type biogenesis protein CcmE, found in Glaesserella parasuis serovar 5 (strain SH0165) (Haemophilus parasuis).